Reading from the N-terminus, the 329-residue chain is Ribosomal RNA small subunit methyltransferase C (329 aa).

It belongs to the methyltransferase superfamily. RsmC family. In terms of assembly, monomer.

The protein localises to the cytoplasm. The catalysed reaction is guanosine(1207) in 16S rRNA + S-adenosyl-L-methionine = N(2)-methylguanosine(1207) in 16S rRNA + S-adenosyl-L-homocysteine + H(+). Its function is as follows. Specifically methylates the guanine in position 1207 of 16S rRNA in the 30S particle. The polypeptide is Ribosomal RNA small subunit methyltransferase C (Actinobacillus pleuropneumoniae serotype 3 (strain JL03)).